Consider the following 129-residue polypeptide: Trefoil factor 2 (129 aa).

An N-terminal signal peptide occupies residues 1 to 23 (MGPRGAPLLVVVLVLGLHALAEG). P-type domains lie at 29-73 (CRCS…FHPL) and 79-122 (EQCV…FFPQ). 7 disulfide bridges follow: C29-C127, C31-C58, C42-C57, C52-C69, C81-C107, C91-C106, and C101-C118.

As to expression, expressed in the digestive tract, where it was found predominantly in the stomach with highest expression in the antrum. It is secreted predominantly from antral mucous cells into the lumen of the gastrointestinal tract.

The protein resides in the secreted. Its function is as follows. Inhibits gastrointestinal motility and gastric acid secretion. Could function as a structural component of gastric mucus, possibly by stabilizing glycoproteins in the mucus gel through interactions with carbohydrate side chains. This Rattus norvegicus (Rat) protein is Trefoil factor 2 (Tff2).